The primary structure comprises 254 residues: Transcription factor bHLH51 (254 aa).

Positions 62 to 111 constitute a bHLH domain; that stretch reads SLSRSHRLAEKRRRDRINSHLTALRKLVPNSDKLDKAALLATVIEQVKEL.

As to quaternary structure, homodimer. As to expression, expressed constitutively in roots, stems, and flowers.

The protein resides in the nucleus. In Arabidopsis thaliana (Mouse-ear cress), this protein is Transcription factor bHLH51 (BHLH51).